The sequence spans 82 residues: Small ribosomal subunit protein bS16 (82 aa).

This sequence belongs to the bacterial ribosomal protein bS16 family.

The protein is Small ribosomal subunit protein bS16 of Blochmanniella floridana.